We begin with the raw amino-acid sequence, 283 residues long: Large ribosomal subunit protein mL46 (283 aa).

Lys217 carries the N6-succinyllysine modification. An N6-acetyllysine modification is found at Lys228. An N6-succinyllysine modification is found at Lys246.

This sequence belongs to the mitochondrion-specific ribosomal protein mL46 family. In terms of assembly, component of the mitochondrial ribosome large subunit (39S) which comprises a 16S rRNA and about 50 distinct proteins.

The protein resides in the mitochondrion. This chain is Large ribosomal subunit protein mL46 (Mrpl46), found in Mus musculus (Mouse).